A 373-amino-acid chain; its full sequence is Queuine tRNA-ribosyltransferase accessory subunit 2 (373 aa).

Residues C320, C322, C325, and H351 each coordinate Zn(2+).

Belongs to the queuine tRNA-ribosyltransferase family. QTRT2 subfamily. As to quaternary structure, heterodimer of a catalytic subunit and an accessory subunit. Requires Zn(2+) as cofactor.

It is found in the cytoplasm. Non-catalytic subunit of the queuine tRNA-ribosyltransferase (TGT) that catalyzes the base-exchange of a guanine (G) residue with queuine (Q) at position 34 (anticodon wobble position) in tRNAs with GU(N) anticodons (tRNA-Asp, -Asn, -His and -Tyr), resulting in the hypermodified nucleoside queuosine (7-(((4,5-cis-dihydroxy-2-cyclopenten-1-yl)amino)methyl)-7-deazaguanosine). This Caenorhabditis elegans protein is Queuine tRNA-ribosyltransferase accessory subunit 2.